The primary structure comprises 206 residues: LexA repressor (206 aa).

The H-T-H motif DNA-binding region spans 28 to 48; the sequence is RAEIATRLGFKSANAAEEHLK. Residues Ser123 and Lys160 each act as for autocatalytic cleavage activity in the active site.

It belongs to the peptidase S24 family. In terms of assembly, homodimer.

The enzyme catalyses Hydrolysis of Ala-|-Gly bond in repressor LexA.. Represses a number of genes involved in the response to DNA damage (SOS response), including recA and lexA. In the presence of single-stranded DNA, RecA interacts with LexA causing an autocatalytic cleavage which disrupts the DNA-binding part of LexA, leading to derepression of the SOS regulon and eventually DNA repair. The sequence is that of LexA repressor from Shewanella baltica (strain OS223).